The following is a 426-amino-acid chain: tRNA(Ile)-lysidine synthase (426 aa).

An ATP-binding site is contributed by 27–32; that stretch reads SGGADS.

It belongs to the tRNA(Ile)-lysidine synthase family.

It is found in the cytoplasm. It carries out the reaction cytidine(34) in tRNA(Ile2) + L-lysine + ATP = lysidine(34) in tRNA(Ile2) + AMP + diphosphate + H(+). In terms of biological role, ligates lysine onto the cytidine present at position 34 of the AUA codon-specific tRNA(Ile) that contains the anticodon CAU, in an ATP-dependent manner. Cytidine is converted to lysidine, thus changing the amino acid specificity of the tRNA from methionine to isoleucine. This is tRNA(Ile)-lysidine synthase from Bacteroides thetaiotaomicron (strain ATCC 29148 / DSM 2079 / JCM 5827 / CCUG 10774 / NCTC 10582 / VPI-5482 / E50).